A 205-amino-acid chain; its full sequence is MAPPLLSLPLCILPPGSGSPRLVCYCERDSGGDGDRDDFNLYVTDAAELWSTCFSPDSLARLKARFGLSGAEDIHSRFRAACQQQAVTVSLQEDRALITLSGDTPALAFDLSKVPSPEAAPRLQALTLSLAEHVCNLERRLAAAEETITSPKKNTQPAGTQFLPELDHQRGSSGPGVRRRCPGESLINPGFKSKKPAAGVDFDET.

Residues 39–81 (FNLYVTDAAELWSTCFSPDSLARLKARFGLSGAEDIHSRFRAA) form the PISA domain. Phosphothreonine is present on Thr-147. Positions 147 to 159 (TITSPKKNTQPAG) are enriched in polar residues. Residues 147-205 (TITSPKKNTQPAGTQFLPELDHQRGSSGPGVRRRCPGESLINPGFKSKKPAAGVDFDET) are disordered. The residue at position 150 (Ser-150) is a Phosphoserine. Residues 172 to 205 (SSGPGVRRRCPGESLINPGFKSKKPAAGVDFDET) form a mediates interaction with XRCC5/Ku80 and XRCC6/Ku70 and association with the non-homologous end joining core complex region. The short motif at 191 to 205 (FKSKKPAAGVDFDET) is the XLM element.

The protein belongs to the XRCC4-XLF family. PAXX subfamily. Homodimer. Interacts with the DNA-bound XRCC5/Ku80 and XRCC6/Ku70 heterodimer (Ku complex); the interaction is direct. Associated component of the non-homologous end joining (NHEJ) complex, composed of the core proteins PRKDC, LIG4, XRCC4, XRCC6/Ku70, XRCC5/Ku86 and NHEJ1/XLF. Interacts with POLL (DNA polymerase lambda); promoting POLL recruitment to double-strand breaks (DSBs) and stimulation of the end-filling activity of POLL. Post-translationally, phosphorylation may inhibit interaction with the DNA-bound XRCC5/Ku80 and XRCC6/Ku70 heterodimer (Ku complex).

The protein localises to the nucleus. The protein resides in the chromosome. Non-essential DNA repair protein involved in DNA non-homologous end joining (NHEJ); participates in double-strand break (DSB) repair and V(D)J recombination. May act as a scaffold required for accumulation of the Ku heterodimer, composed of XRCC5/Ku80 and XRCC6/Ku70, at double-strand break sites and promote the assembly and/or stability of the NHEJ machinery. Involved in NHEJ by promoting the ligation of blunt-ended DNA ends. Together with NHEJ1/XLF, collaborates with DNA polymerase lambda (POLL) to promote joining of non-cohesive DNA ends. Constitutes a non-essential component of classical NHEJ: has a complementary but distinct function with NHEJ1/XLF in DNA repair. This Mus musculus (Mouse) protein is Protein PAXX.